Consider the following 381-residue polypeptide: L-lactate dehydrogenase (381 aa).

One can recognise an FMN hydroxy acid dehydrogenase domain in the interval 1 to 380; that stretch reads MIISASTDYR…TRDSLVRELG (380 aa). Y24 is a substrate binding site. FMN is bound by residues S106 and Q127. Y129 contributes to the substrate binding site. T155 contacts FMN. A substrate-binding site is contributed by R164. K251 contacts FMN. The active-site Proton acceptor is H275. R278 lines the substrate pocket. 306-330 contributes to the FMN binding site; that stretch reads DSGIRSGLDVVRMIALGADTVLIGR.

The protein belongs to the FMN-dependent alpha-hydroxy acid dehydrogenase family. As to quaternary structure, homotetramer. FMN serves as cofactor.

Its subcellular location is the cell inner membrane. It catalyses the reaction (S)-lactate + A = pyruvate + AH2. Functionally, catalyzes the conversion of L-lactate to pyruvate. Is coupled to the respiratory chain. This is L-lactate dehydrogenase from Pseudomonas entomophila (strain L48).